A 627-amino-acid chain; its full sequence is 1-deoxy-D-xylulose-5-phosphate synthase (627 aa).

Residues His-76 and 117 to 119 (SHA) each bind thiamine diphosphate. Asp-148 provides a ligand contact to Mg(2+). Thiamine diphosphate-binding positions include 149–150 (GA), Asn-178, Phe-288, and Glu-370. Asn-178 contributes to the Mg(2+) binding site.

The protein belongs to the transketolase family. DXPS subfamily. In terms of assembly, homodimer. Requires Mg(2+) as cofactor. Thiamine diphosphate is required as a cofactor.

The enzyme catalyses D-glyceraldehyde 3-phosphate + pyruvate + H(+) = 1-deoxy-D-xylulose 5-phosphate + CO2. The protein operates within metabolic intermediate biosynthesis; 1-deoxy-D-xylulose 5-phosphate biosynthesis; 1-deoxy-D-xylulose 5-phosphate from D-glyceraldehyde 3-phosphate and pyruvate: step 1/1. In terms of biological role, catalyzes the acyloin condensation reaction between C atoms 2 and 3 of pyruvate and glyceraldehyde 3-phosphate to yield 1-deoxy-D-xylulose-5-phosphate (DXP). This chain is 1-deoxy-D-xylulose-5-phosphate synthase, found in Cutibacterium acnes (strain DSM 16379 / KPA171202) (Propionibacterium acnes).